Here is a 373-residue protein sequence, read N- to C-terminus: Anhydro-N-acetylmuramic acid kinase (373 aa).

12 to 19 (GTSLDGVD) serves as a coordination point for ATP.

This sequence belongs to the anhydro-N-acetylmuramic acid kinase family.

It carries out the reaction 1,6-anhydro-N-acetyl-beta-muramate + ATP + H2O = N-acetyl-D-muramate 6-phosphate + ADP + H(+). Its pathway is amino-sugar metabolism; 1,6-anhydro-N-acetylmuramate degradation. The protein operates within cell wall biogenesis; peptidoglycan recycling. Catalyzes the specific phosphorylation of 1,6-anhydro-N-acetylmuramic acid (anhMurNAc) with the simultaneous cleavage of the 1,6-anhydro ring, generating MurNAc-6-P. Is required for the utilization of anhMurNAc either imported from the medium or derived from its own cell wall murein, and thus plays a role in cell wall recycling. The chain is Anhydro-N-acetylmuramic acid kinase from Salmonella dublin (strain CT_02021853).